The chain runs to 144 residues: Small ribosomal subunit protein eS12y (144 aa).

Position 2 is an N-acetylserine (Ser2).

The protein belongs to the eukaryotic ribosomal protein eS12 family.

The polypeptide is Small ribosomal subunit protein eS12y (RPS12C) (Arabidopsis thaliana (Mouse-ear cress)).